We begin with the raw amino-acid sequence, 141 residues long: Protein MGF 100-2L (141 aa).

It belongs to the asfivirus MGF 100 family.

Functionally, plays a role in virus cell tropism, and may be required for efficient virus replication in macrophages. This is Protein MGF 100-2L from African swine fever virus (isolate Tick/Malawi/Lil 20-1/1983) (ASFV).